Consider the following 153-residue polypeptide: Small ribosomal subunit protein uS19 (153 aa).

Residues 1–63 (MGFRGAWNKR…QEIWDEFRAF (63 aa)) are unknown. A small ribosomal subunit protein uS19 region spans residues 64-153 (VNKKAWVDPK…EKSAKVVKKK (90 aa)).

The protein belongs to the universal ribosomal protein uS19 family.

Its function is as follows. Protein S19 forms a complex with S13 that binds strongly to the 16S ribosomal RNA. The protein is Small ribosomal subunit protein uS19 of Hydrogenobaculum sp. (strain Y04AAS1).